A 155-amino-acid polypeptide reads, in one-letter code: Ribonuclease H (155 aa).

The 144-residue stretch at 7–150 folds into the RNase H type-1 domain; it reads AQNAVDLYTD…ADKLACKGRD (144 aa). Mg(2+) is bound by residues Asp-16, Glu-54, Asp-77, and Asp-142.

The protein belongs to the RNase H family. As to quaternary structure, monomer. The cofactor is Mg(2+).

It is found in the cytoplasm. The catalysed reaction is Endonucleolytic cleavage to 5'-phosphomonoester.. In terms of biological role, endonuclease that specifically degrades the RNA of RNA-DNA hybrids. The protein is Ribonuclease H of Saccharopolyspora erythraea (strain ATCC 11635 / DSM 40517 / JCM 4748 / NBRC 13426 / NCIMB 8594 / NRRL 2338).